We begin with the raw amino-acid sequence, 102 residues long: NADH-quinone oxidoreductase subunit K (102 aa).

The next 3 membrane-spanning stretches (helical) occupy residues 3–23, 31–51, and 66–86; these read IGLT…AFGI, IVLL…LVAF, and FILT…VVYF.

Belongs to the complex I subunit 4L family. NDH-1 is composed of 14 different subunits. Subunits NuoA, H, J, K, L, M, N constitute the membrane sector of the complex.

It is found in the cell inner membrane. It catalyses the reaction a quinone + NADH + 5 H(+)(in) = a quinol + NAD(+) + 4 H(+)(out). NDH-1 shuttles electrons from NADH, via FMN and iron-sulfur (Fe-S) centers, to quinones in the respiratory chain. The immediate electron acceptor for the enzyme in this species is believed to be ubiquinone. Couples the redox reaction to proton translocation (for every two electrons transferred, four hydrogen ions are translocated across the cytoplasmic membrane), and thus conserves the redox energy in a proton gradient. The sequence is that of NADH-quinone oxidoreductase subunit K from Rhodospirillum centenum (strain ATCC 51521 / SW).